The chain runs to 626 residues: tRNA uridine 5-carboxymethylaminomethyl modification enzyme MnmG (626 aa).

Residue 13-18 participates in FAD binding; the sequence is GGGHAG. 273–287 is a binding site for NAD(+); that stretch reads GPRYCPSIEDKIHRF.

Belongs to the MnmG family. In terms of assembly, homodimer. Heterotetramer of two MnmE and two MnmG subunits. The cofactor is FAD.

It localises to the cytoplasm. Its function is as follows. NAD-binding protein involved in the addition of a carboxymethylaminomethyl (cmnm) group at the wobble position (U34) of certain tRNAs, forming tRNA-cmnm(5)s(2)U34. This is tRNA uridine 5-carboxymethylaminomethyl modification enzyme MnmG from Acinetobacter baumannii (strain AB307-0294).